The sequence spans 142 residues: Extracellular globin-1 (142 aa).

The Globin domain occupies 1-142 (ECLVTEGLKV…DQIIDGIKDI (142 aa)). An intrachain disulfide couples cysteine 2 to cysteine 131. Histidine 94 is a binding site for heme b.

Belongs to the globin family. In terms of assembly, the extracellular hemoglobin of the earthworm consists of 12 subunits that have a hexagonal bilayer structure with a molecular weight near 3.8 million. Each one-twelfth subunit is composed primarily of disulfide linked trimers (chains A, B, and C) and monomers (chain D).

The sequence is that of Extracellular globin-1 from Lumbricus terrestris (Common earthworm).